The primary structure comprises 329 residues: Aspartate--ammonia ligase (329 aa).

This sequence belongs to the class-II aminoacyl-tRNA synthetase family. AsnA subfamily.

The protein localises to the cytoplasm. It catalyses the reaction L-aspartate + NH4(+) + ATP = L-asparagine + AMP + diphosphate + H(+). It functions in the pathway amino-acid biosynthesis; L-asparagine biosynthesis; L-asparagine from L-aspartate (ammonia route): step 1/1. The chain is Aspartate--ammonia ligase from Ureaplasma urealyticum serovar 10 (strain ATCC 33699 / Western).